A 795-amino-acid chain; its full sequence is Probable alpha,alpha-trehalose-phosphate synthase [UDP-forming] 4 (795 aa).

A glycosyltransferase region spans residues 4–469; it reads PRLLVVSMSL…WADDFMKLTL (466 aa).

The protein in the N-terminal section; belongs to the glycosyltransferase 20 family. This sequence in the C-terminal section; belongs to the trehalose phosphatase family.

The enzyme catalyses D-glucose 6-phosphate + UDP-alpha-D-glucose = alpha,alpha-trehalose 6-phosphate + UDP + H(+). The protein is Probable alpha,alpha-trehalose-phosphate synthase [UDP-forming] 4 (TPS4) of Arabidopsis thaliana (Mouse-ear cress).